Reading from the N-terminus, the 120-residue chain is 5-hydroxyisourate hydrolase 2 (120 aa).

His10, Arg48, and Tyr117 together coordinate substrate.

The protein belongs to the transthyretin family. 5-hydroxyisourate hydrolase subfamily. In terms of assembly, homotetramer.

The catalysed reaction is 5-hydroxyisourate + H2O = 5-hydroxy-2-oxo-4-ureido-2,5-dihydro-1H-imidazole-5-carboxylate + H(+). Functionally, catalyzes the hydrolysis of 5-hydroxyisourate (HIU) to 2-oxo-4-hydroxy-4-carboxy-5-ureidoimidazoline (OHCU). In Rhizobium meliloti (strain 1021) (Ensifer meliloti), this protein is 5-hydroxyisourate hydrolase 2.